The chain runs to 452 residues: Tubulin alpha-1 chain (452 aa).

Residue Q11 participates in GTP binding. K40 is subject to N6-acetyllysine. Residues E71, S140, G144, T145, T179, N206, and N228 each coordinate GTP. E71 serves as a coordination point for Mg(2+). The active site involves E254. The interval 433–452 (EEVGVDSADAEGEEEEGDEY) is disordered.

Belongs to the tubulin family. Dimer of alpha and beta chains. A typical microtubule is a hollow water-filled tube with an outer diameter of 25 nm and an inner diameter of 15 nM. Alpha-beta heterodimers associate head-to-tail to form protofilaments running lengthwise along the microtubule wall with the beta-tubulin subunit facing the microtubule plus end conferring a structural polarity. Microtubules usually have 13 protofilaments but different protofilament numbers can be found in some organisms and specialized cells. It depends on Mg(2+) as a cofactor. In terms of processing, undergoes a tyrosination/detyrosination cycle, the cyclic removal and re-addition of a C-terminal tyrosine residue by the enzymes tubulin tyrosine carboxypeptidase (TTCP) and tubulin tyrosine ligase (TTL), respectively. Acetylation of alpha chains at Lys-40 stabilizes microtubules and affects affinity and processivity of microtubule motors. This modification has a role in multiple cellular functions, ranging from cell motility, cell cycle progression or cell differentiation to intracellular trafficking and signaling.

Its subcellular location is the cytoplasm. The protein resides in the cytoskeleton. The enzyme catalyses GTP + H2O = GDP + phosphate + H(+). Tubulin is the major constituent of microtubules, a cylinder consisting of laterally associated linear protofilaments composed of alpha- and beta-tubulin heterodimers. Microtubules grow by the addition of GTP-tubulin dimers to the microtubule end, where a stabilizing cap forms. Below the cap, tubulin dimers are in GDP-bound state, owing to GTPase activity of alpha-tubulin. The sequence is that of Tubulin alpha-1 chain from Paracentrotus lividus (Common sea urchin).